We begin with the raw amino-acid sequence, 607 residues long: Elongation factor 4 (607 aa).

A tr-type G domain is found at 11–193 (SKIRNFSIIA…QIVEKVPAPT (183 aa)). GTP contacts are provided by residues 23 to 28 (DHGKST) and 140 to 143 (NKID).

It belongs to the TRAFAC class translation factor GTPase superfamily. Classic translation factor GTPase family. LepA subfamily.

The protein localises to the cell membrane. The enzyme catalyses GTP + H2O = GDP + phosphate + H(+). In terms of biological role, required for accurate and efficient protein synthesis under certain stress conditions. May act as a fidelity factor of the translation reaction, by catalyzing a one-codon backward translocation of tRNAs on improperly translocated ribosomes. Back-translocation proceeds from a post-translocation (POST) complex to a pre-translocation (PRE) complex, thus giving elongation factor G a second chance to translocate the tRNAs correctly. Binds to ribosomes in a GTP-dependent manner. This is Elongation factor 4 from Bacillus anthracis (strain A0248).